Reading from the N-terminus, the 159-residue chain is Ecotin (159 aa).

Residues 1 to 22 (MRPTPMTAILALTLAAAAPAMA) form the signal peptide. The cysteines at positions 68 and 105 are disulfide-linked.

The protein belongs to the protease inhibitor I11 (ecotin) family. Homodimer.

Its subcellular location is the periplasm. General inhibitor of family S1 serine proteases. The polypeptide is Ecotin (Pseudomonas putida (strain GB-1)).